Consider the following 420-residue polypeptide: Serine/threonine-protein kinase PCRK2 (420 aa).

The interval 1-64 is disordered; the sequence is MKCFLFPLGD…SNTSMSAREN (64 aa). A compositionally biased stretch (polar residues) spans 22-36; that stretch reads SPTSNFSDVNKSGSD. Residues 42-58 are compositionally biased toward low complexity; sequence VSGTSTVSSTGRNSNTS. Threonine 70 is subject to Phosphothreonine. A Protein kinase domain is found at 81–366; it reads FSRSGMIGEG…EVLEMVTKIV (286 aa). ATP is bound by residues 87-95 and lysine 115; that span reads IGEGGFGCV. The residue at position 164 (tyrosine 164) is a Phosphotyrosine. Catalysis depends on aspartate 215, which acts as the Proton acceptor. Phosphoserine is present on residues serine 219 and serine 249. A phosphothreonine mark is found at threonine 250 and threonine 255. Tyrosine 263 carries the phosphotyrosine modification. A disordered region spans residues 369-396; that stretch reads SSPGNGGKKPQLVPLKSQETSRVEEGKN. Residues 387 to 396 show a composition bias toward basic and acidic residues; that stretch reads ETSRVEEGKN.

Belongs to the protein kinase superfamily. Ser/Thr protein kinase family. As to quaternary structure, interacts with FLS2.

It is found in the cell membrane. The catalysed reaction is L-seryl-[protein] + ATP = O-phospho-L-seryl-[protein] + ADP + H(+). The enzyme catalyses L-threonyl-[protein] + ATP = O-phospho-L-threonyl-[protein] + ADP + H(+). Its function is as follows. Functions redundantly with PCRK1 in basal resistance against bacterial pathogens and in regulation of plant immunity. Functions together with PCRK1 downstream of the pathogen-associated molecular pattern (PAMP) receptor FLS2. Contributes to the induction of SARD1 and CBP60G, which are transcriptional activator of ICS1, an enzyme involved in salicylate (SA) biosynthesis upon pathogen attack. This chain is Serine/threonine-protein kinase PCRK2, found in Arabidopsis thaliana (Mouse-ear cress).